A 259-amino-acid polypeptide reads, in one-letter code: Small ribosomal subunit protein eS4 (259 aa).

Residues 41–105 (LPLSVLLKER…TDQSFRILYD (65 aa)) form the S4 RNA-binding domain. Position 248 is a phosphothreonine (threonine 248). Serine 258 is modified (phosphoserine).

Belongs to the eukaryotic ribosomal protein eS4 family.

This is Small ribosomal subunit protein eS4 from Tetrahymena thermophila.